Consider the following 173-residue polypeptide: Thiol-disulfide oxidoreductase ResA (173 aa).

Residues 10–29 (VIILLILSGAVGFTLYQGFF) form a helical; Signal-anchor for type II membrane protein membrane-spanning segment. Positions 35 to 173 (MQIGKEAPNF…LEGYLKKITP (139 aa)) constitute a Thioredoxin domain. A disulfide bridge links Cys73 with Cys76.

The protein belongs to the thioredoxin family. ResA subfamily.

The protein localises to the cell membrane. The protein operates within protein modification; cytochrome c assembly. Functionally, thiol-disulfide oxidoreductase which is required in disulfide reduction during c-type cytochrome synthesis. May accept reducing equivalents from CcdA, leading to breakage of disulfide bonds in apocytochrome c; following this reduction heme can be covalently attached. The chain is Thiol-disulfide oxidoreductase ResA from Bacillus thuringiensis (strain Al Hakam).